The sequence spans 198 residues: HTH-type transcriptional regulator BetI (198 aa).

The HTH tetR-type domain occupies 8 to 68 (PLRRRELIDA…ATMRHLLREL (61 aa)). A DNA-binding region (H-T-H motif) is located at residues 31-50 (TVAQIAHEAGVSPALAHHYF).

Its pathway is amine and polyamine biosynthesis; betaine biosynthesis via choline pathway [regulation]. Functionally, repressor involved in the biosynthesis of the osmoprotectant glycine betaine. It represses transcription of the choline transporter BetT and the genes of BetAB involved in the synthesis of glycine betaine. This chain is HTH-type transcriptional regulator BetI, found in Brucella melitensis biotype 2 (strain ATCC 23457).